The sequence spans 178 residues: MGDPRRLGKKYDTPNHPWIGERIQKEREISHKYGLVNKKELWKMETQLRNYRRQARKLISDTTTQGGKEAVQLFNVLKRYAILVEQEPTLDHILSLNIESILERRLQTLVYRKGLAKTAKQARQLIVHGHIAVNGRRVTSPSYLVSVSENNAIGYVPNSPMALENHPERTTAVSEENQ.

An S4 RNA-binding domain is found at 104–166; the sequence is RRLQTLVYRK…PNSPMALENH (63 aa).

The protein belongs to the universal ribosomal protein uS4 family. Part of the 30S ribosomal subunit. Contacts protein S5. The interaction surface between S4 and S5 is involved in control of translational fidelity.

In terms of biological role, one of the primary rRNA binding proteins, it binds directly to 16S rRNA where it nucleates assembly of the body of the 30S subunit. Functionally, with S5 and S12 plays an important role in translational accuracy. In Methanococcus vannielii (strain ATCC 35089 / DSM 1224 / JCM 13029 / OCM 148 / SB), this protein is Small ribosomal subunit protein uS4.